Reading from the N-terminus, the 295-residue chain is Glutamate 5-kinase (295 aa).

Lys9 is an ATP binding site. Substrate contacts are provided by Ser49, Asp136, and Asn148. ATP-binding positions include 168–169 (TD) and 210–216 (TGGMLTK).

It belongs to the glutamate 5-kinase family.

Its subcellular location is the cytoplasm. It carries out the reaction L-glutamate + ATP = L-glutamyl 5-phosphate + ADP. Its pathway is amino-acid biosynthesis; L-proline biosynthesis; L-glutamate 5-semialdehyde from L-glutamate: step 1/2. Catalyzes the transfer of a phosphate group to glutamate to form L-glutamate 5-phosphate. In Neisseria gonorrhoeae (strain NCCP11945), this protein is Glutamate 5-kinase.